The primary structure comprises 213 residues: Orotate phosphoribosyltransferase (213 aa).

Lysine 26 provides a ligand contact to 5-phospho-alpha-D-ribose 1-diphosphate. An orotate-binding site is contributed by 34-35 (FF). Residues 72-73 (YK), arginine 99, lysine 100, lysine 103, histidine 105, and 124-132 (DDVITAGTA) each bind 5-phospho-alpha-D-ribose 1-diphosphate. Residues threonine 128 and arginine 156 each coordinate orotate.

This sequence belongs to the purine/pyrimidine phosphoribosyltransferase family. PyrE subfamily. In terms of assembly, homodimer. Requires Mg(2+) as cofactor.

The catalysed reaction is orotidine 5'-phosphate + diphosphate = orotate + 5-phospho-alpha-D-ribose 1-diphosphate. It participates in pyrimidine metabolism; UMP biosynthesis via de novo pathway; UMP from orotate: step 1/2. Functionally, catalyzes the transfer of a ribosyl phosphate group from 5-phosphoribose 1-diphosphate to orotate, leading to the formation of orotidine monophosphate (OMP). This Actinobacillus pleuropneumoniae serotype 5b (strain L20) protein is Orotate phosphoribosyltransferase.